The sequence spans 509 residues: Ethanolamine-phosphate phospho-lyase (509 aa).

N6-(pyridoxal phosphate)lysine is present on Lys279. A compositionally biased stretch (basic and acidic residues) spans Glu451–Thr474. The disordered stretch occupies residues Glu451–Thr509.

It belongs to the class-III pyridoxal-phosphate-dependent aminotransferase family. As to quaternary structure, homotetramer. Requires pyridoxal 5'-phosphate as cofactor.

It localises to the mitochondrion. It carries out the reaction phosphoethanolamine + H2O = acetaldehyde + NH4(+) + phosphate. Functionally, catalyzes the pyridoxal-phosphate-dependent breakdown of phosphoethanolamine, converting it to ammonia, inorganic phosphate and acetaldehyde. The protein is Ethanolamine-phosphate phospho-lyase (etnppl) of Xenopus laevis (African clawed frog).